The sequence spans 75 residues: MLEKAKIDRINELSKKKKAGTLTSAEKVEQDKLRKEYIKSFRTHMKGTIENTTIIDPNGKDVTPHKVKQLRKNKY.

The interval 56–75 (DPNGKDVTPHKVKQLRKNKY) is disordered. A compositionally biased stretch (basic residues) spans 65–75 (HKVKQLRKNKY).

Belongs to the UPF0291 family.

Its subcellular location is the cytoplasm. This chain is UPF0291 protein lmo1304, found in Listeria monocytogenes serovar 1/2a (strain ATCC BAA-679 / EGD-e).